The primary structure comprises 264 residues: Regulator of cytoskeleton and endocytosis RVS161 (264 aa).

The BAR domain maps to 15-239 (ASVIVKDVDK…LDPASRDEYA (225 aa)).

Its subcellular location is the cytoplasm. It is found in the cytoskeleton. Component of a cytoskeletal structure that is required for the formation of endocytic vesicles at the plasma membrane level. Plays an important role in virulence. The sequence is that of Regulator of cytoskeleton and endocytosis RVS161 (RVS161) from Candida albicans (strain SC5314 / ATCC MYA-2876) (Yeast).